A 748-amino-acid chain; its full sequence is Polyribonucleotide nucleotidyltransferase (748 aa).

Mg(2+) is bound by residues D487 and D493. The KH domain occupies P554–I613. Residues G623–K691 enclose the S1 motif domain. The segment at A693–N733 is disordered. Over residues S699–K712 the composition is skewed to polar residues. The segment covering D713–D722 has biased composition (basic and acidic residues).

This sequence belongs to the polyribonucleotide nucleotidyltransferase family. Mg(2+) is required as a cofactor.

It localises to the cytoplasm. The enzyme catalyses RNA(n+1) + phosphate = RNA(n) + a ribonucleoside 5'-diphosphate. In terms of biological role, involved in mRNA degradation. Catalyzes the phosphorolysis of single-stranded polyribonucleotides processively in the 3'- to 5'-direction. The chain is Polyribonucleotide nucleotidyltransferase from Rickettsia peacockii (strain Rustic).